Here is a 703-residue protein sequence, read N- to C-terminus: Calpain-8 (703 aa).

The region spanning 45–344 (LFKDPEFPAC…FSRLEICNLS (300 aa)) is the Calpain catalytic domain. Catalysis depends on residues Cys105, His262, and Asn286. Positions 356–379 (WNLVLFNGHWTRGSTAGGCQNYPA) are domain III. EF-hand domains lie at 575 to 610 (FNIN…IQKY), 618 to 640 (DYNH…AGFT), and 670 to 703 (IRLE…CVLV). Residues Asp588, Asn590, Thr592, Thr594, Glu599, Asp618, Asn620, Ser622, Thr624, and Glu629 each coordinate Ca(2+).

Belongs to the peptidase C2 family. As to quaternary structure, monomer and homooligomer. Interacts with COPS1/GPS1, COPB1, EYA2, NME2, NME4 and TOMM70. It depends on Ca(2+) as a cofactor. In terms of processing, undergoes autolytic cleavage between Ala-5 and Ala-6 which gives rise to fragments extending from Ala-6 to the C-terminus, Ala-6 to the EF-hand 2 domain and from Ala-6 to the beginning of domain III. As to expression, stomach.

It localises to the cytoplasm. The protein resides in the golgi apparatus. It carries out the reaction Broad endopeptidase specificity.. Calcium-regulated non-lysosomal thiol-protease. Involved in membrane trafficking in the gastric surface mucus cells (pit cells) and may involve the membrane trafficking of mucus cells via interactions with coat protein. Proteolytically cleaves the beta-subunit of coatomer complex. This Homo sapiens (Human) protein is Calpain-8 (CAPN8).